A 428-amino-acid chain; its full sequence is NADH-ubiquinone oxidoreductase chain 2 (428 aa).

A run of 14 helical transmembrane segments spans residues 22 to 42, 59 to 79, 84 to 104, 108 to 128, 140 to 160, 185 to 205, 218 to 238, 241 to 261, 269 to 289, 292 to 312, 332 to 352, 356 to 376, 384 to 404, and 408 to 428; these read IAFL…LHFG, LDES…VIMN, LGWE…YMLT, LLLM…ILSL, LLSS…FYGL, ILLL…LWVP, WMGS…YPLL, LAPF…VLMA, FLAY…AIGD, AYGY…VLLS, LGLG…FAGF, LLVL…LLIL, YYLK…SAPI, and YPNL…LLLL.

Belongs to the complex I subunit 2 family.

The protein resides in the mitochondrion inner membrane. It catalyses the reaction a ubiquinone + NADH + 5 H(+)(in) = a ubiquinol + NAD(+) + 4 H(+)(out). Its function is as follows. Core subunit of the mitochondrial membrane respiratory chain NADH dehydrogenase (Complex I) that is believed to belong to the minimal assembly required for catalysis. Complex I functions in the transfer of electrons from NADH to the respiratory chain. The immediate electron acceptor for the enzyme is believed to be ubiquinone. This chain is NADH-ubiquinone oxidoreductase chain 2, found in Hyaloraphidium curvatum (Lower fungus).